A 20-amino-acid chain; its full sequence is Malate dehydrogenase (20 aa).

11–17 (GAAGQIG) is a binding site for NAD(+).

Belongs to the LDH/MDH superfamily. MDH type 2 family.

The enzyme catalyses (S)-malate + NAD(+) = oxaloacetate + NADH + H(+). In terms of biological role, catalyzes the reversible oxidation of malate to oxaloacetate. The sequence is that of Malate dehydrogenase (mdh) from Kibdelosporangium aridum.